Here is a 472-residue protein sequence, read N- to C-terminus: Eukaryotic translation initiation factor 2 subunit 3 (472 aa).

An N-acetylalanine modification is found at Ala-2. Ser-16 carries the phosphoserine modification. The tr-type G domain maps to 39 to 248 (QATINIGTIG…IVKKIPVPPR (210 aa)). The tract at residues 48–55 (GHVAHGKS) is G1. GTP is bound at residue 51–56 (AHGKST). The G2 stretch occupies residues 76–80 (NITIK). Positions 134-137 (DCPG) are G3. GTP-binding positions include 190–193 (NKID) and 225–227 (SAQ). Residues 190–193 (NKID) are G4. Residues 225–227 (SAQ) are G5. The interval 457-469 (GQIRRGVTIKPTV) is interacts with CDC123.

The protein belongs to the TRAFAC class translation factor GTPase superfamily. Classic translation factor GTPase family. EIF2G subfamily. As to quaternary structure, eukaryotic translation initiation factor 2 eIF2 is a heterotrimeric complex composed of an alpha (EIF2S1), a beta (EIF2S2) and a gamma (EIF2S3) chain. eIF2 is member of the 43S pre-initiation complex (43S PIC). Interacts (via C-terminus) with CDC123; the interaction is direct.

The protein resides in the cytoplasm. It is found in the cytosol. The enzyme catalyses GTP + H2O = GDP + phosphate + H(+). Its function is as follows. Member of the eIF2 complex that functions in the early steps of protein synthesis by forming a ternary complex with GTP and initiator tRNA. This complex binds to a 40S ribosomal subunit, followed by mRNA binding to form the 43S pre-initiation complex (43S PIC). Junction of the 60S ribosomal subunit to form the 80S initiation complex is preceded by hydrolysis of the GTP bound to eIF2 and release of an eIF2-GDP binary complex. In order for eIF2 to recycle and catalyze another round of initiation, the GDP bound to eIF2 must exchange with GTP by way of a reaction catalyzed by eIF-2B. This chain is Eukaryotic translation initiation factor 2 subunit 3 (EIF2S3), found in Pongo abelii (Sumatran orangutan).